The chain runs to 708 residues: Polyribonucleotide nucleotidyltransferase (708 aa).

Asp485 and Asp491 together coordinate Mg(2+). The KH domain maps to 552–611 (PKTYIMSIPPDKIRDVIGSGGKVINKIIAETGVKIDIKEDGKIFVMSEDSEGAKKALKII). The S1 motif domain maps to 621–689 (GEIYLGKVTK…NQGRINLSRK (69 aa)). The tract at residues 689–708 (KDAIKDSEKKEQNEKDVQKK) is disordered.

The protein belongs to the polyribonucleotide nucleotidyltransferase family. It depends on Mg(2+) as a cofactor.

It is found in the cytoplasm. The enzyme catalyses RNA(n+1) + phosphate = RNA(n) + a ribonucleoside 5'-diphosphate. Involved in mRNA degradation. Catalyzes the phosphorolysis of single-stranded polyribonucleotides processively in the 3'- to 5'-direction. This Clostridium kluyveri (strain NBRC 12016) protein is Polyribonucleotide nucleotidyltransferase.